The primary structure comprises 249 residues: Glutathione S-transferase tcpG (249 aa).

In terms of domain architecture, GST N-terminal spans leucine 20–glycine 109. Residues asparagine 115–arginine 249 form the GST C-terminal domain.

This sequence belongs to the GST superfamily.

It carries out the reaction RX + glutathione = an S-substituted glutathione + a halide anion + H(+). Its pathway is secondary metabolite biosynthesis. In terms of biological role, glutathione S-transferase; part of the gene cluster that mediates the biosynthesis of an unusual class of epipolythiodioxopiperazines (ETPs) lacking the reactive thiol group important for toxicity. Firstly, L-tyrosine is prenylated by tcpD, before undergoing condensation with L-glycine in a reaction catalyzed by the NRPS tcpP leading to the diketopiperazine (DKP) backbone. Afterwards the alpha-carbon of tyrosine is oxidized by the cytochrome P450 tcpC to form a hydroxyl group. However, in contrast other ETP biosynthesis pathways studied so far, tcpC is not able to bishydroxylate the DKP at both alpha-carbon positions, but hydroxylates the alpha-carbon of the tyrosine part and the nitrogen of the glycine part. The next steps involve an alpha,beta-elimination reaction catalyzed by tcpI, a methylation by the methyltransferase tcpN the action of the four enzyme cascade tcpG/K/J/I. Due to a dysfunctional cytochrome P450 monooxygenase tcpC, the pathway leads to the biosynthesis of probable non-toxic metabolites lacking the reactive thiol group. In Claviceps purpurea (strain 20.1) (Ergot fungus), this protein is Glutathione S-transferase tcpG.